Here is a 241-residue protein sequence, read N- to C-terminus: MATVSMRDMLQAGVHFGHQTRYWNPKMKPFIFGARNKVHIINLEQTVPLFNDALAELNKIASRKGKILFVGTKRAASEAVKEAANSCDQFFVNHRWLGGMLTNWKTVRQSIKRLKDLETQSQDGTFEKLTKKEALMRTRELDKLENSLGGIKDMGGLPDALFVIDAEHEHIAINEANNLGIPVFAIVDTNSDPDGVDFIIPGNDDAIRAINLYLTAVATTVRKGRSQDLAEQAEESFVEAE.

The protein belongs to the universal ribosomal protein uS2 family.

In Sodalis glossinidius (strain morsitans), this protein is Small ribosomal subunit protein uS2.